We begin with the raw amino-acid sequence, 334 residues long: Phospho-N-acetylmuramoyl-pentapeptide-transferase (334 aa).

Transmembrane regions (helical) follow at residues 2–22, 55–75, 78–98, 116–136, 154–174, 187–207, 211–231, 236–256, 262–282, and 311–331; these read IPVL…GPVV, VIFL…PGGV, GWIE…LGFM, EKLL…VFVL, GLAL…VVLA, GLAA…ALVM, WVGI…CYNF, VFMG…AAVI, FLLI…IQVI, and VVLT…AGLK.

Belongs to the glycosyltransferase 4 family. MraY subfamily. Mg(2+) is required as a cofactor.

It is found in the cell membrane. The catalysed reaction is UDP-N-acetyl-alpha-D-muramoyl-L-alanyl-gamma-D-glutamyl-meso-2,6-diaminopimeloyl-D-alanyl-D-alanine + di-trans,octa-cis-undecaprenyl phosphate = di-trans,octa-cis-undecaprenyl diphospho-N-acetyl-alpha-D-muramoyl-L-alanyl-D-glutamyl-meso-2,6-diaminopimeloyl-D-alanyl-D-alanine + UMP. It participates in cell wall biogenesis; peptidoglycan biosynthesis. In terms of biological role, catalyzes the initial step of the lipid cycle reactions in the biosynthesis of the cell wall peptidoglycan: transfers peptidoglycan precursor phospho-MurNAc-pentapeptide from UDP-MurNAc-pentapeptide onto the lipid carrier undecaprenyl phosphate, yielding undecaprenyl-pyrophosphoryl-MurNAc-pentapeptide, known as lipid I. The polypeptide is Phospho-N-acetylmuramoyl-pentapeptide-transferase (Desulforudis audaxviator (strain MP104C)).